Here is a 614-residue protein sequence, read N- to C-terminus: Polyamine transporter 2 (614 aa).

Positions 1 to 40 (MSDQESVVSFNSQNTSMVDVEGQQPQQYVPSKTNSRANQL) are disordered. Residues 1–173 (MSDQESVVSF…WPSWVRWSYT (173 aa)) are Cytoplasmic-facing. Position 50 is a phosphoserine (serine 50). A compositionally biased stretch (polar residues) spans 99–122 (RTASALSRTRTKQLNRTATNSSST). A disordered region spans residues 99–144 (RTASALSRTRTKQLNRTATNSSSTGKEEMEEEETEEREDQSGENEL). The segment covering 126-144 (EMEEEETEEREDQSGENEL) has biased composition (acidic residues). Residues 174–194 (VLLSILVICVAYGSACISGGL) form a helical membrane-spanning segment. The Extracellular portion of the chain corresponds to 195-206 (GTVEKKYHVGME). Residues 207 to 227 (AAILSCSLMVIGFSLGPLIWS) traverse the membrane as a helical segment. Residues 228–236 (PVSDLYGRR) lie on the Cytoplasmic side of the membrane. Residues 237–257 (VAYFVSMGLYVIFNIPCALAP) traverse the membrane as a helical segment. At 258–266 (NLGCLLACR) the chain is on the extracellular side. The chain crosses the membrane as a helical span at residues 267 to 287 (FLCGVWSSSGLCLVGGSIADM). Residues 288–297 (FPSETRGKAI) are Cytoplasmic-facing. The chain crosses the membrane as a helical span at residues 298-318 (AFFAFAPYVGPVVGPLVNGFI). Topologically, residues 319 to 326 (SVSTGRMD) are extracellular. A helical transmembrane segment spans residues 327 to 347 (LIFWVNMAFAGVMWIISSAIP). Topologically, residues 348-407 (ETYAPVILKRKAARLRKETGNPKIMTEQEAQGVSMSEMMRACLLRPLYFAVTEPVLVATC) are cytoplasmic. A helical membrane pass occupies residues 408–428 (FYVCLIYSLLYAFFFAFPVIF). Residues 429–437 (GELYGYKDN) are Extracellular-facing. Residues 438–458 (LVGLMFIPIVIGALWALATTF) traverse the membrane as a helical segment. Residues 459-478 (YCENKYLQIVKQRKPTPEDR) lie on the Cytoplasmic side of the membrane. Residues 479–499 (LLGAKIGAPFAAIALWILGAT) traverse the membrane as a helical segment. Residues 500–503 (AYKH) lie on the Extracellular side of the membrane. Residues 504-524 (IIWVGPASAGLAFGFGMVLIY) form a helical membrane-spanning segment. The Cytoplasmic portion of the chain corresponds to 525–541 (YSLNNYIIDCYVQYASS). A helical membrane pass occupies residues 542 to 562 (ALATKVFLRSAGGAAFPLFTI). Residues 563–574 (QMYHKLNLHWGS) are Extracellular-facing. The helical transmembrane segment at 575–595 (WLLAFISTAMIALPFAFSYWG) threads the bilayer. The Cytoplasmic portion of the chain corresponds to 596 to 614 (KGLRHKLSKKDYSIDSVEM).

The protein belongs to the major facilitator superfamily. DHA1 family. Polyamines/proton antiporter (TC 2.A.1.2.16) subfamily.

The protein resides in the cell membrane. Its function is as follows. Cell membrane polyamine/proton antiporter, involved in the detoxification of excess polyamines in the cytoplasm. Recognizes spermine, but not spermidine. This chain is Polyamine transporter 2 (TPO2), found in Saccharomyces cerevisiae (strain ATCC 204508 / S288c) (Baker's yeast).